A 190-amino-acid polypeptide reads, in one-letter code: Xanthine phosphoribosyltransferase (190 aa).

Xanthine is bound by residues L20 and N27. 128–132 (ANGKA) is a 5-phospho-alpha-D-ribose 1-diphosphate binding site. Residue K156 coordinates xanthine.

The protein belongs to the purine/pyrimidine phosphoribosyltransferase family. Xpt subfamily. In terms of assembly, homodimer.

The protein localises to the cytoplasm. It carries out the reaction XMP + diphosphate = xanthine + 5-phospho-alpha-D-ribose 1-diphosphate. Its pathway is purine metabolism; XMP biosynthesis via salvage pathway; XMP from xanthine: step 1/1. Converts the preformed base xanthine, a product of nucleic acid breakdown, to xanthosine 5'-monophosphate (XMP), so it can be reused for RNA or DNA synthesis. In Pseudomonas fluorescens (strain Pf0-1), this protein is Xanthine phosphoribosyltransferase.